A 142-amino-acid chain; its full sequence is Hemoglobin subunit alpha-A (142 aa).

The Globin domain occupies 2 to 142 (VLSAADKTNV…VATVLTAKYR (141 aa)). H59 is a binding site for O2. H88 is a binding site for heme b.

This sequence belongs to the globin family. As to quaternary structure, heterotetramer of two alpha chains and two beta chains. As to expression, red blood cells.

Functionally, involved in oxygen transport from the lung to the various peripheral tissues. This Apus apus (Common swift) protein is Hemoglobin subunit alpha-A (HBAA).